We begin with the raw amino-acid sequence, 126 residues long: Small ribosomal subunit protein uS13 (126 aa).

A disordered region spans residues His92–Lys126. Positions Gln101–Lys126 are enriched in basic residues.

It belongs to the universal ribosomal protein uS13 family. In terms of assembly, part of the 30S ribosomal subunit. Forms a loose heterodimer with protein S19. Forms two bridges to the 50S subunit in the 70S ribosome.

In terms of biological role, located at the top of the head of the 30S subunit, it contacts several helices of the 16S rRNA. In the 70S ribosome it contacts the 23S rRNA (bridge B1a) and protein L5 of the 50S subunit (bridge B1b), connecting the 2 subunits; these bridges are implicated in subunit movement. Contacts the tRNAs in the A and P-sites. This Nostoc punctiforme (strain ATCC 29133 / PCC 73102) protein is Small ribosomal subunit protein uS13.